The sequence spans 157 residues: Transcriptional repressor NrdR (157 aa).

A zinc finger lies at 3–34; it reads CSNCQNKNTKVLDSRPIEEGRAIRRRRECERC. Residues 49–139 enclose the ATP-cone domain; it reads LIVVKKDGVR…VYRQFKDITV (91 aa).

This sequence belongs to the NrdR family. Zn(2+) is required as a cofactor.

In terms of biological role, negatively regulates transcription of bacterial ribonucleotide reductase nrd genes and operons by binding to NrdR-boxes. The polypeptide is Transcriptional repressor NrdR (Oceanobacillus iheyensis (strain DSM 14371 / CIP 107618 / JCM 11309 / KCTC 3954 / HTE831)).